A 264-amino-acid polypeptide reads, in one-letter code: S-adenosylmethionine decarboxylase proenzyme (264 aa).

S112 acts as the Schiff-base intermediate with substrate; via pyruvic acid in catalysis. S112 is modified (pyruvic acid (Ser); by autocatalysis). The active-site Proton acceptor; for processing activity is H117. Residue C140 is the Proton donor; for catalytic activity of the active site.

The protein belongs to the prokaryotic AdoMetDC family. Type 2 subfamily. Heterooctamer of four alpha and four beta chains arranged as a tetramer of alpha/beta heterodimers. Pyruvate is required as a cofactor. In terms of processing, is synthesized initially as an inactive proenzyme. Formation of the active enzyme involves a self-maturation process in which the active site pyruvoyl group is generated from an internal serine residue via an autocatalytic post-translational modification. Two non-identical subunits are generated from the proenzyme in this reaction, and the pyruvate is formed at the N-terminus of the alpha chain, which is derived from the carboxyl end of the proenzyme. The post-translation cleavage follows an unusual pathway, termed non-hydrolytic serinolysis, in which the side chain hydroxyl group of the serine supplies its oxygen atom to form the C-terminus of the beta chain, while the remainder of the serine residue undergoes an oxidative deamination to produce ammonia and the pyruvoyl group blocking the N-terminus of the alpha chain.

It catalyses the reaction S-adenosyl-L-methionine + H(+) = S-adenosyl 3-(methylsulfanyl)propylamine + CO2. Its pathway is amine and polyamine biosynthesis; S-adenosylmethioninamine biosynthesis; S-adenosylmethioninamine from S-adenosyl-L-methionine: step 1/1. Catalyzes the decarboxylation of S-adenosylmethionine to S-adenosylmethioninamine (dcAdoMet), the propylamine donor required for the synthesis of the polyamines spermine and spermidine from the diamine putrescine. The chain is S-adenosylmethionine decarboxylase proenzyme from Yersinia pseudotuberculosis serotype O:1b (strain IP 31758).